We begin with the raw amino-acid sequence, 404 residues long: Diphosphomevalonate decarboxylase mvd1 (404 aa).

Residues 25–28 (YWGK), Arg-82, 161–166 (SGSACR), and Thr-217 each bind (R)-5-diphosphomevalonate.

It belongs to the diphosphomevalonate decarboxylase family. As to quaternary structure, homodimer.

It catalyses the reaction (R)-5-diphosphomevalonate + ATP = isopentenyl diphosphate + ADP + phosphate + CO2. Its pathway is isoprenoid biosynthesis; isopentenyl diphosphate biosynthesis via mevalonate pathway; isopentenyl diphosphate from (R)-mevalonate: step 3/3. Diphosphomevalonate decarboxylase; part of the second module of ergosterol biosynthesis pathway that includes the middle steps of the pathway. Mvd1 converts diphosphomevalonate into isopentenyl diphosphate. The second module is carried out in the vacuole and involves the formation of farnesyl diphosphate, which is also an important intermediate in the biosynthesis of ubiquinone, dolichol, heme and prenylated proteins. Activity by the mevalonate kinase erg12 (AFUA_4G07780) first converts mevalonate into 5-phosphomevalonate. 5-phosphomevalonate is then further converted to 5-diphosphomevalonate by the phosphomevalonate kinase erg8 (AFUA_5G10680). The diphosphomevalonate decarboxylase mvd1 (AFUA_4G07130) then produces isopentenyl diphosphate. The isopentenyl-diphosphate delta-isomerase idi1 (AFUA_6G11160) then catalyzes the 1,3-allylic rearrangement of the homoallylic substrate isopentenyl (IPP) to its highly electrophilic allylic isomer, dimethylallyl diphosphate (DMAPP). Finally the farnesyl diphosphate synthase erg20 (AFUA_5G02450) catalyzes the sequential condensation of isopentenyl pyrophosphate with dimethylallyl pyrophosphate, and then with the resultant geranylpyrophosphate to the ultimate product farnesyl pyrophosphate. The chain is Diphosphomevalonate decarboxylase mvd1 from Aspergillus fumigatus (strain ATCC MYA-4609 / CBS 101355 / FGSC A1100 / Af293) (Neosartorya fumigata).